Consider the following 288-residue polypeptide: Elongation factor Ts (288 aa).

An involved in Mg(2+) ion dislocation from EF-Tu region spans residues 80 to 83; it reads TDFV.

This sequence belongs to the EF-Ts family.

The protein localises to the cytoplasm. Its function is as follows. Associates with the EF-Tu.GDP complex and induces the exchange of GDP to GTP. It remains bound to the aminoacyl-tRNA.EF-Tu.GTP complex up to the GTP hydrolysis stage on the ribosome. The polypeptide is Elongation factor Ts (Chromobacterium violaceum (strain ATCC 12472 / DSM 30191 / JCM 1249 / CCUG 213 / NBRC 12614 / NCIMB 9131 / NCTC 9757 / MK)).